The following is a 221-amino-acid chain: Ribosome maturation factor RimM (221 aa).

Positions 1–23 (MTERKQGAAAPRPLNRPQGESPK) are disordered. Positions 144–221 (ENEFYWVDLI…RIVVDWGLDY (78 aa)) constitute a PRC barrel domain.

The protein belongs to the RimM family. In terms of assembly, binds ribosomal protein uS19.

Its subcellular location is the cytoplasm. Its function is as follows. An accessory protein needed during the final step in the assembly of 30S ribosomal subunit, possibly for assembly of the head region. Essential for efficient processing of 16S rRNA. May be needed both before and after RbfA during the maturation of 16S rRNA. It has affinity for free ribosomal 30S subunits but not for 70S ribosomes. This chain is Ribosome maturation factor RimM, found in Cupriavidus pinatubonensis (strain JMP 134 / LMG 1197) (Cupriavidus necator (strain JMP 134)).